We begin with the raw amino-acid sequence, 251 residues long: Ubiquinone/menaquinone biosynthesis C-methyltransferase UbiE (251 aa).

Residues threonine 74, aspartate 95, 123–124, and serine 140 each bind S-adenosyl-L-methionine; that span reads NA.

The protein belongs to the class I-like SAM-binding methyltransferase superfamily. MenG/UbiE family.

The enzyme catalyses a 2-demethylmenaquinol + S-adenosyl-L-methionine = a menaquinol + S-adenosyl-L-homocysteine + H(+). The catalysed reaction is a 2-methoxy-6-(all-trans-polyprenyl)benzene-1,4-diol + S-adenosyl-L-methionine = a 5-methoxy-2-methyl-3-(all-trans-polyprenyl)benzene-1,4-diol + S-adenosyl-L-homocysteine + H(+). It functions in the pathway quinol/quinone metabolism; menaquinone biosynthesis; menaquinol from 1,4-dihydroxy-2-naphthoate: step 2/2. The protein operates within cofactor biosynthesis; ubiquinone biosynthesis. Methyltransferase required for the conversion of demethylmenaquinol (DMKH2) to menaquinol (MKH2) and the conversion of 2-polyprenyl-6-methoxy-1,4-benzoquinol (DDMQH2) to 2-polyprenyl-3-methyl-6-methoxy-1,4-benzoquinol (DMQH2). The protein is Ubiquinone/menaquinone biosynthesis C-methyltransferase UbiE of Escherichia fergusonii (strain ATCC 35469 / DSM 13698 / CCUG 18766 / IAM 14443 / JCM 21226 / LMG 7866 / NBRC 102419 / NCTC 12128 / CDC 0568-73).